Reading from the N-terminus, the 109-residue chain is MANVTTDIKRNDTVAVTSGKDKGKQGRVLRVIPDKGRILVEHVGMVKNHVKPNPQKNIKGGIAEQESAIAISNVALVCAKCGPTRVAHKGEGKQKSRVCAKCGSDLTGK.

Residues 1–24 (MANVTTDIKRNDTVAVTSGKDKGK) are disordered.

This sequence belongs to the universal ribosomal protein uL24 family. In terms of assembly, part of the 50S ribosomal subunit.

Functionally, one of two assembly initiator proteins, it binds directly to the 5'-end of the 23S rRNA, where it nucleates assembly of the 50S subunit. In terms of biological role, one of the proteins that surrounds the polypeptide exit tunnel on the outside of the subunit. In Koribacter versatilis (strain Ellin345), this protein is Large ribosomal subunit protein uL24.